Here is a 466-residue protein sequence, read N- to C-terminus: Uronate isomerase (466 aa).

The protein belongs to the metallo-dependent hydrolases superfamily. Uronate isomerase family.

It catalyses the reaction D-glucuronate = D-fructuronate. It carries out the reaction aldehydo-D-galacturonate = keto-D-tagaturonate. It functions in the pathway carbohydrate metabolism; pentose and glucuronate interconversion. The polypeptide is Uronate isomerase (Streptococcus agalactiae serotype III (strain NEM316)).